The sequence spans 207 residues: MLNKLSLLLKDAGISLTDHQKNQLIAYVNMLHKWNKAYNLTSVRDPNEMLVRHILDSIVVAPYLQGERFIDVGSGPGLPGIPLSIVRPEAHFTLLDSLGKRVRFLRQVQHELKLENIEPVQSRVEEFPSEPPFDGVISRAFASLNDMVSWCHHLPGEQGRFYALKGQMPEDEIALLPEEYQVESVVKLQVPALDGERHLVVIKANKI.

S-adenosyl-L-methionine is bound by residues Gly-73, Leu-78, 124 to 125 (VE), and Arg-139.

The protein belongs to the methyltransferase superfamily. RNA methyltransferase RsmG family.

Its subcellular location is the cytoplasm. It catalyses the reaction guanosine(527) in 16S rRNA + S-adenosyl-L-methionine = N(7)-methylguanosine(527) in 16S rRNA + S-adenosyl-L-homocysteine. Specifically methylates the N7 position of guanine in position 527 of 16S rRNA. This Shigella flexneri protein is Ribosomal RNA small subunit methyltransferase G.